The primary structure comprises 615 residues: Leucine aminopeptidase 2-1 (615 aa).

Substrate contacts are provided by residues 137-139 (QCQ) and 261-266 (PYGGME). Residue His-290 participates in Zn(2+) binding. Glu-291 serves as the catalytic Proton acceptor. The Zn(2+) site is built by His-294 and Glu-313. The active-site Proton donor is Tyr-380.

It belongs to the peptidase M1 family. The cofactor is Zn(2+).

Its subcellular location is the cytoplasm. The protein localises to the nucleus. The catalysed reaction is an epoxide + H2O = an ethanediol. Its function is as follows. Aminopeptidase that preferentially cleaves di- and tripeptides. Also has low epoxide hydrolase activity (in vitro). Can hydrolyze the epoxide leukotriene LTA(4) but it forms preferentially 5,6-dihydroxy-7,9,11,14-eicosatetraenoic acid rather than the cytokine leukotriene B(4) as the product compared to the homologous mammalian enzyme (in vitro). In Meyerozyma guilliermondii (strain ATCC 6260 / CBS 566 / DSM 6381 / JCM 1539 / NBRC 10279 / NRRL Y-324) (Yeast), this protein is Leucine aminopeptidase 2-1.